Consider the following 565-residue polypeptide: Acyl-CoA ligase easD (565 aa).

Residues 213-221 (TSGTSGKQK), 354-359 (HAYGLT), aspartate 438, arginine 457, and lysine 555 contribute to the ATP site. The interval 284 to 354 (DMQLMLKTIE…KLRPTWKINH (71 aa)) is SBD1. The interval 355–417 (AYGLTETGVV…FNSPSCFLGY (63 aa)) is SBD2.

It belongs to the ATP-dependent AMP-binding enzyme family.

It participates in antibiotic biosynthesis. Functionally, acyl-CoA ligase; part of the gene cluster that mediates the biosynthesis of emericellamides, secondary metabolites acting as antibiotics. The biosynthesis of emericellamides initiates from the highly reducing polyketide synthase easB which catalyzes the formation of the linear polyketide chain. EasB produces several polyketides that can be further processed by the downstream enzymes. The polyketides are released from easB as linear polyketide carboxylic acids, which are converted to CoA thioesters by the acyl-CoA ligase easD. The substrates are then loaded onto the acyltransferase easC, which shuttles them to the first thiolation (T) domain of the nonribosomal peptide synthetase easA. EasA then performs condensation of the polyketides with one glycine, two alanine, one valine and one leucine residues. A last step of cyclization leads to the production of emericellamides. In Emericella nidulans (strain FGSC A4 / ATCC 38163 / CBS 112.46 / NRRL 194 / M139) (Aspergillus nidulans), this protein is Acyl-CoA ligase easD.